We begin with the raw amino-acid sequence, 591 residues long: Uncoordinated protein 58 (591 aa).

A disordered region spans residues 1-24; the sequence is MFFYSPNVAPQPSSTSHRRPTLTH. The helical transmembrane segment at 184 to 204 threads the bilayer; it reads VILVSVLIGYLCLGAWILMLL. Asn-226 is a glycosylation site (N-linked (GlcNAc...) asparagine). 5 consecutive transmembrane segments (helical) span residues 289-309, 318-338, 400-420, 428-448, and 453-473; these read TFPT…YGEV, VFSV…AADI, PIGA…AMFI, FIHA…GDIV, and IFLS…TMCV.

It belongs to the two pore domain potassium channel (TC 1.A.1.8) family.

It localises to the membrane. In terms of biological role, has a role in mobility, possibly in the transport of potassium in muscles. This chain is Uncoordinated protein 58, found in Caenorhabditis elegans.